The sequence spans 115 residues: Large ribosomal subunit protein uL18 (115 aa).

A disordered region spans residues 1–29 (MISKPDKNKLRQKRHTRVRGKISGTSETP). Residues 10–20 (LRQKRHTRVRG) are compositionally biased toward basic residues.

Belongs to the universal ribosomal protein uL18 family. In terms of assembly, part of the 50S ribosomal subunit; part of the 5S rRNA/L5/L18/L25 subcomplex. Contacts the 5S and 23S rRNAs.

Functionally, this is one of the proteins that bind and probably mediate the attachment of the 5S RNA into the large ribosomal subunit, where it forms part of the central protuberance. The protein is Large ribosomal subunit protein uL18 of Lactococcus lactis subsp. lactis (strain IL1403) (Streptococcus lactis).